A 93-amino-acid polypeptide reads, in one-letter code: MLTAVYKSKKKADSFLFVEKRDDFTKVPEPLMAMFGQPKYVMLINLAKRAMLGTADLETVKAALTEKGYYLQIPPPQENLLSQLRKENGADND.

In terms of domain architecture, YcgL spans 1–85 (MLTAVYKSKK…PQENLLSQLR (85 aa)).

The chain is YcgL domain-containing protein PSHAb0508 from Pseudoalteromonas translucida (strain TAC 125).